A 186-amino-acid polypeptide reads, in one-letter code: TATA-box-binding protein (186 aa).

A run of 2 repeats spans residues 10–86 (IENV…FDKL) and 101–179 (VQNI…VERL).

It belongs to the TBP family.

General factor that plays a role in the activation of archaeal genes transcribed by RNA polymerase. Binds specifically to the TATA box promoter element which lies close to the position of transcription initiation. This chain is TATA-box-binding protein, found in Haloarcula marismortui (strain ATCC 43049 / DSM 3752 / JCM 8966 / VKM B-1809) (Halobacterium marismortui).